Here is a 131-residue protein sequence, read N- to C-terminus: Profilin (131 aa).

The protein belongs to the profilin family. Occurs in many kinds of cells as a complex with monomeric actin in a 1:1 ratio.

The protein localises to the cytoplasm. It is found in the cytoskeleton. In terms of biological role, binds to actin and affects the structure of the cytoskeleton. At high concentrations, profilin prevents the polymerization of actin, whereas it enhances it at low concentrations. By binding to PIP2, it inhibits the formation of IP3 and DG. In Prunus avium (Cherry), this protein is Profilin.